A 671-amino-acid chain; its full sequence is ABC transporter ATP-binding protein/permease wht-1 (671 aa).

The Cytoplasmic portion of the chain corresponds to 1-408 (MHKAPISTLI…SWLTVIRDPN (408 aa)). The region spanning 64-310 (TNFVDRFRNN…FEKCGYPCPA (247 aa)) is the ABC transporter domain. An ATP-binding site is contributed by 100–107 (GSSGAGKT). The helical transmembrane segment at 409-429 (LLSVRLLQILITAFITGIVFF) threads the bilayer. The Extracellular segment spans residues 430–451 (QTPVTPATIISINGIMFNHIRN). A helical membrane pass occupies residues 452–472 (MNFMLQFPNVPVITAELPIVL). Topologically, residues 473–497 (RENANGVYRTSAYFLAKNIAELPQY) are cytoplasmic. A helical transmembrane segment spans residues 498–518 (IILPILYNTIVYWMSGLYPNF). Over 519-525 (WNYCFAS) the chain is Extracellular. Residues 526–546 (LVTILITNVAISISYAVATIF) traverse the membrane as a helical segment. Residues 547-550 (ANTD) are Cytoplasmic-facing. The chain crosses the membrane as a helical span at residues 551-571 (VAMTILPIFVVPIMAFGGFFI). Topologically, residues 572–644 (TFDAIPSYFK…DFSASHKIFD (73 aa)) are extracellular. Residues 645 to 665 (ISILFGMFIGIRIIAYVALLI) form a helical membrane-spanning segment. The Cytoplasmic portion of the chain corresponds to 666–671 (RSYNNT).

This sequence belongs to the ABC transporter superfamily. ABCG family. Eye pigment precursor importer (TC 3.A.1.204) subfamily. As to expression, expressed in the intestine in both larvae and adults. Expressed in the gut of males.

It localises to the membrane. Required for efficient RNA interference (RNAi). Plays a role in germline development. This Caenorhabditis elegans protein is ABC transporter ATP-binding protein/permease wht-1.